The chain runs to 540 residues: MTTDKKSKSKSSEKSTQEVEQVIKPEKTPILDTSKWPLLLKNYDQLSVRTGHYTPIPNGHSPLKRPIKEYVKYGIINLDKPSNPSSHEVVAWIRTILRVTKTGHSGTLDPKVTGCLIVCIERATRLVKSQQGAGKEYIGIVRLHGAIEGTTELSKAVDTLTGALFQRPPQKSAVKKRLRVRTIHNSKLLEFDPERNLGLIWVDCEAGTYIRTLCVHIGLLMGVGGHMQELRRVRSGIMSEKKGQVTMHDVKDAQYEYDNSKDESYLRRVIQPLEAILTNYKRIVVKDSAINAICYGAKLMIPGLLRYEQDIESNEEVVLITTKGEAIAIGIAQMTTASMATCDHGVVATIKRVIMDRDVYPVRWGLGPKAKVKKEMIKDGKLDKFGKPNEKTPSDWTNTYTYYTGQVATTTTTSPVESMNVDTPKKATASVAVKAEVESSEDEKPVPKKEKKDKKEKKKDSSDDESEEEKSSKKDKKEKKEKKEKKEKKSSKDDSDDESSKKEKKDKKRKKSSDKDSDSEKESSDKKDKKDKKEKKKSKN.

A disordered region spans residues 1-24 (MTTDKKSKSKSSEKSTQEVEQVIK). The Nucleophile role is filled by Asp-109. A PUA domain is found at 280–355 (YKRIVVKDSA…VVATIKRVIM (76 aa)). The interval 414–540 (SPVESMNVDT…DKKEKKKSKN (127 aa)) is disordered. Residues 448 to 494 (KKEKKDKKEKKKDSSDDESEEEKSSKKDKKEKKEKKEKKEKKSSKDD) are a coiled coil. The span at 473–489 (KKDKKEKKEKKEKKEKK) shows a compositional bias: basic residues. 2 stretches are compositionally biased toward basic and acidic residues: residues 490 to 503 (SSKDDSDDESSKKE) and 513 to 528 (SDKDSDSEKESSDKKD). The segment covering 529–540 (KKDKKEKKKSKN) has biased composition (basic residues).

This sequence belongs to the pseudouridine synthase TruB family. In terms of assembly, component of the small nucleolar ribonucleoprotein particles containing H/ACA-type snoRNAs (H/ACA snoRNPs).

It is found in the nucleus. The protein resides in the nucleolus. It carries out the reaction a uridine in RNA = a pseudouridine in RNA. Plays a central role in ribosomal RNA processing. Probable catalytic subunit of H/ACA small nucleolar ribonucleoprotein (H/ACA snoRNP) complex, which catalyzes pseudouridylation of rRNA. This involves the isomerization of uridine such that the ribose is subsequently attached to C5, instead of the normal N1. Pseudouridine ('psi') residues may serve to stabilize the conformation of rRNAs. This chain is Probable H/ACA ribonucleoprotein complex subunit 4 (nola4), found in Dictyostelium discoideum (Social amoeba).